Reading from the N-terminus, the 447-residue chain is Clusterin (447 aa).

The signal sequence occupies residues 1 to 22; that stretch reads MKTLLLCVGLLLSWERGQVLGD. Residues 77-80 carry the Nuclear localization signal motif; it reads KKNK. N-linked (GlcNAc...) asparagine glycosylation is found at Asn-85 and Asn-102. 5 disulfide bridges follow: Cys-101–Cys-311, Cys-112–Cys-303, Cys-115–Cys-300, Cys-120–Cys-293, and Cys-128–Cys-283. Ser-132 bears the Phosphoserine mark. N-linked (GlcNAc...) asparagine glycans are attached at residues Asn-144, Asn-289, Asn-326, Asn-352, and Asn-372. The residue at position 394 (Ser-394) is a Phosphoserine. Residues 441-445 carry the Nuclear localization signal motif; that stretch reads RKKKR.

Belongs to the clusterin family. As to quaternary structure, antiparallel disulfide-linked heterodimer of an alpha chain and a beta chain. Self-associates and forms higher oligomers. Interacts with a broad range of misfolded proteins, including APP, APOC2 and LYZ. Slightly acidic pH promotes interaction with misfolded proteins. Forms high-molecular weight oligomers upon interaction with misfolded proteins. Interacts with APOA1, LRP2, CLUAP1 and PON1. Interacts with the complement membrane attack complex. Interacts (via alpha chain) with XRCC6. Interacts with SYVN1, COMMD1, BTRC, CUL1 and with ubiquitin and SCF (SKP1-CUL1-F-box protein) E3 ubiquitin-protein ligase complexes. Interacts (via alpha chain) with BAX in stressed cells, where BAX undergoes a conformation change leading to association with the mitochondrial membrane. Does not interact with BAX in unstressed cells. Found in a complex with LTF, CLU, EPPIN and SEMG1. Interacts (immaturely glycosylated pre-secreted form) with HSPA5; this interaction promotes CLU stability and facilitates stress-induced CLU retrotranslocation from the secretory pathway to the mitochondria, thereby reducing stress-induced apoptosis by stabilizing mitochondrial membrane integrity. Interacts with BCL2L1; this interaction releases and activates BAX and promotes cell death. Interacts with TGFBR2 and ACVR1. Interacts (secreted form) with STMN3; this interaction may act as an important modulator during neuronal differentiation. Interacts with VLDLR and LRP8. Proteolytically cleaved on its way through the secretory system, probably within the Golgi lumen. Proteolytic cleavage is not necessary for its chaperone activity. All non-secreted forms are not proteolytically cleaved. Chaperone activity of uncleaved forms is dependent on a non-reducing environment. Post-translationally, polyubiquitinated, leading to proteasomal degradation. Under cellular stress, the intracellular level of cleaved form is reduced due to proteasomal degradation. In terms of processing, heavily N-glycosylated. About 30% of the protein mass is comprised of complex N-linked carbohydrate. Endoplasmic reticulum (ER) stress induces changes in glycosylation status and increases level of hypoglycosylated forms. Core carbohydrates are essential for chaperone activity. Non-secreted forms are hypoglycosylated or unglycosylated.

Its subcellular location is the secreted. It is found in the nucleus. The protein localises to the cytoplasm. It localises to the mitochondrion membrane. The protein resides in the cytosol. Its subcellular location is the microsome. It is found in the endoplasmic reticulum. The protein localises to the mitochondrion. It localises to the perinuclear region. The protein resides in the cytoplasmic vesicle. Its subcellular location is the secretory vesicle. It is found in the chromaffin granule. Functionally, functions as extracellular chaperone that prevents aggregation of non native proteins. Prevents stress-induced aggregation of blood plasma proteins. Inhibits formation of amyloid fibrils by APP, APOC2, B2M, CALCA, CSN3, SNCA and aggregation-prone LYZ variants (in vitro). Does not require ATP. Maintains partially unfolded proteins in a state appropriate for subsequent refolding by other chaperones, such as HSPA8/HSC70. Does not refold proteins by itself. Binding to cell surface receptors triggers internalization of the chaperone-client complex and subsequent lysosomal or proteasomal degradation. When secreted, protects cells against apoptosis and against cytolysis by complement: inhibits assembly of the complement membrane attack complex (MAC) by preventing polymerization of C9 pore component of the MAC complex. Intracellular forms interact with ubiquitin and SCF (SKP1-CUL1-F-box protein) E3 ubiquitin-protein ligase complexes and promote the ubiquitination and subsequent proteasomal degradation of target proteins. Promotes proteasomal degradation of COMMD1 and IKBKB. Modulates NF-kappa-B transcriptional activity. Following stress, promotes apoptosis. Inhibits apoptosis when associated with the mitochondrial membrane by interference with BAX-dependent release of cytochrome c into the cytoplasm. Plays a role in the regulation of cell proliferation. An intracellular form suppresses stress-induced apoptosis by stabilizing mitochondrial membrane integrity through interaction with HSPA5. Secreted form does not affect caspase or BAX-mediated intrinsic apoptosis and TNF-induced NF-kappa-B-activity. Secreted form act as an important modulator during neuronal differentiation through interaction with STMN3. Plays a role in the clearance of immune complexes that arise during cell injury. This is Clusterin (CLU) from Oryctolagus cuniculus (Rabbit).